A 310-amino-acid chain; its full sequence is MVKKKIAISCGDIQGIGLELILKSHKEVSVLCEPLYLIHSELLGRANQLLTNAYEVKPLNAIAINSPLPSFNSSTIGKVSAQSGAYSFESFRKACELADDKEVDSICTMPINKLAWQQAQIPFVGHTDFLKQRYKEHQIIMMLGCPKLFVGLFSDHVPLRAVSQLIQVKALVQFLLAFQKSTQAQIIQVCGFNPHAGEEGLFGEEDEKILKAIQESNQTLGFECFLGPLPADSAFAPNKRQITPFYVSMSHDVGLAPLKALYFDESINVSLNAPILRASTDHGTAFDIAYQNKANNKSYLNAIKYLSQRL.

2 residues coordinate substrate: His-126 and Thr-127. Residues His-156, His-195, and His-251 each contribute to the a divalent metal cation site. Residues Lys-259, Asn-268, and Arg-277 each coordinate substrate.

It belongs to the PdxA family. Homodimer. Requires Zn(2+) as cofactor. Mg(2+) serves as cofactor. It depends on Co(2+) as a cofactor.

The protein resides in the cytoplasm. The enzyme catalyses 4-(phosphooxy)-L-threonine + NAD(+) = 3-amino-2-oxopropyl phosphate + CO2 + NADH. The protein operates within cofactor biosynthesis; pyridoxine 5'-phosphate biosynthesis; pyridoxine 5'-phosphate from D-erythrose 4-phosphate: step 4/5. Catalyzes the NAD(P)-dependent oxidation of 4-(phosphooxy)-L-threonine (HTP) into 2-amino-3-oxo-4-(phosphooxy)butyric acid which spontaneously decarboxylates to form 3-amino-2-oxopropyl phosphate (AHAP). The polypeptide is 4-hydroxythreonine-4-phosphate dehydrogenase (Helicobacter acinonychis (strain Sheeba)).